Consider the following 253-residue polypeptide: Discoidin-1 subunit A (253 aa).

Serine 2 is modified (N-acetylserine). The 151-residue stretch at serine 2–glutamine 152 folds into the F5/8 type C domain. A Cell attachment site motif is present at residues arginine 79–aspartate 81.

As to quaternary structure, tetramer of four different chains (A to D). Stalk cells.

The protein resides in the cytoplasm. Galactose- and N-acetylgalactosamine-binding lectin. May play a role in cell-substratum adhesion rather than in cell-cell adhesion. May be necessary for the maintenance of normal elongate morphology during aggregation. In Dictyostelium discoideum (Social amoeba), this protein is Discoidin-1 subunit A (dscA-1).